The primary structure comprises 246 residues: MyoD family inhibitor (246 aa).

Disordered regions lie at residues 1–76 (MYQV…LDST) and 91–151 (GNPL…SKST). The span at 14 to 26 (APYGAPSAAPGPA) shows a compositional bias: low complexity. Residues 99–246 (LLPNDSGHPS…MECCGLCFSS (148 aa)) form the MDFI domain.

The protein belongs to the MDFI family. Interacts (via C-terminus) with AXIN1 and LEF1. Interacts with CCNT2. Interacts (via C-terminus) with Piezo channel composed of PIEZO1 or PIEZO2; the interaction prolongs Piezo channel inactivation.

Its subcellular location is the nucleus. It localises to the cytoplasm. In terms of biological role, inhibits the transactivation activity of the Myod family of myogenic factors and represses myogenesis. Acts by associating with Myod family members and retaining them in the cytoplasm by masking their nuclear localization signals. Can also interfere with the DNA-binding activity of Myod family members. Plays an important role in trophoblast and chondrogenic differentiation. Regulates the transcriptional activity of TCF7L1/TCF3 by interacting directly with TCF7L1/TCF3 and preventing it from binding DNA. Binds to the axin complex, resulting in an increase in the level of free beta-catenin. Affects axin regulation of the WNT and JNK signaling pathways. Regulates the activity of mechanosensitive Piezo channel. The protein is MyoD family inhibitor (MDFI) of Homo sapiens (Human).